A 244-amino-acid chain; its full sequence is EFFHGWYMEPLTKGRYPAIMRKIVGSRLPKFNKTEAKLVTGSYDFLGLNYYVTQYAKPKPNPYPSETHTAMMDAGVDLTFKNSRGEYPGPVFAEDANSYYYPKGIYYVMDYFKTKYGNPLIYITENGISTPGSENRCEAIADYKRIDYLCSHLCFLRKVIKEKGVNVRGYFAWALGDNYEFGKGFTVRFGLSYVNWDNLDDRNLKESGKWYQRFINGTAKNSAKQDFLRSSLSSQSQKKRLADA.

The N-linked (GlcNAc...) asparagine glycan is linked to asparagine 32. Position 51 (tyrosine 51) interacts with substrate. Glutamate 125 serves as the catalytic Nucleophile. Residues tryptophan 173 and 180-181 (EF) each bind substrate. Residue asparagine 216 is glycosylated (N-linked (GlcNAc...) asparagine).

Belongs to the glycosyl hydrolase 1 family. In terms of assembly, homodimer. In terms of tissue distribution, in vacuoles called myrosin grains of a certain class of cells, myrosin cells, distributed in the cotyledons and the axis of the embryo as well as in different organs of the growing plant.

It localises to the vacuole. The enzyme catalyses a thioglucoside + H2O = a sugar + a thiol.. In terms of biological role, degradation of glucosinolates (glucose residue linked by a thioglucoside bound to an amino acid derivative) to glucose, sulfate and any of the products: thiocyanates, isothiocyanates, nitriles, epithionitriles or oxazolidine-2-thiones. The sequence is that of Myrosinase MB1 from Sinapis alba (White mustard).